Reading from the N-terminus, the 536-residue chain is Putative ATP-dependent RNA helicase L364 (536 aa).

Positions 47–214 (ISILLKYFLV…IPFYLMNFIP (168 aa)) constitute a Helicase ATP-binding domain. ATP is bound at residue 60–67 (SDTGVGKT). Residues 160-163 (DESH) carry the DEAH box motif. A coiled-coil region spans residues 288-334 (LSDDSDKIAEAYEEIAELMRELEEKKTQCKNHLAKIQKLKQEIELRK). The 149-residue stretch at 338–486 (FIEQTQLYLE…ISAINDGDLE (149 aa)) folds into the Helicase C-terminal domain. A disordered region spans residues 502 to 536 (VLNEPVNNPIEEPVNDPVKDPVEDLTDNQPNIVEV).

Belongs to the DEAD box helicase family. DEAH subfamily.

The catalysed reaction is ATP + H2O = ADP + phosphate + H(+). This chain is Putative ATP-dependent RNA helicase L364, found in Acanthamoeba polyphaga (Amoeba).